Reading from the N-terminus, the 1250-residue chain is Probable autotransporter YfaL (1250 aa).

A signal peptide spans 1 to 28 (MRIIFLRKEYLSLLPSMIASLFSANGVA). Residues 914–951 (RSQEVTPPSPPDPDPTPDPDPTPDPDPTPDPEPTPAYQ) are disordered. Copy 1 of the repeat occupies 919–920 (TP). Residues 919–948 (TPPSPPDPDPTPDPDPTPDPDPTPDPEPTP) are 15 X 2 AA approximate tandem repeats of [DTPE]-P. Residues 921-922 (PS) form a 2; approximate repeat. Repeat unit 3 spans residues 923–924 (PP). The 4; approximate repeat unit spans residues 925 to 926 (DP). Repeat copies occupy residues 927–928 (DP), 929–930 (TP), 931–932 (DP), 933–934 (DP), 935–936 (TP), 937–938 (DP), 939–940 (DP), 941–942 (TP), 943–944 (DP), 945–946 (EP), and 947–948 (TP). Residues 928–942 (PTPDPDPTPDPDPTP) show a composition bias toward acidic residues. The Autotransporter domain occupies 980–1250 (AGGDGQTLNL…AGFLSMTVKW (271 aa)).

Post-translationally, an approximately 170 kDa protein is detected in the outer membrane, while a C-terminal 55 kDa fragment is detected in whole cells. The full-length putative autotransporter may be cleaved to release the mature protein from the outer membrane; Pefabloc SC, a Ser-Thr protease inhibitor prevents the appearance of the 55 kDa C--terminal fragment.

It localises to the periplasm. The protein resides in the secreted. Its subcellular location is the cell surface. It is found in the cell outer membrane. In terms of biological role, probably an autotransporter. Upon overexpression shows increased adherence to polyvinyl chloride (PVC) plates, increased mature biofilm formation. The protein is Probable autotransporter YfaL (yfaL) of Escherichia coli (strain K12).